Consider the following 428-residue polypeptide: L-gulono-1,4-lactone dehydrogenase (428 aa).

The FAD-binding PCMH-type domain maps to 12 to 179 (QVCAPSAIVR…SQVTLQTVPL (168 aa)).

This sequence belongs to the oxygen-dependent FAD-linked oxidoreductase family. A divalent metal cation serves as cofactor.

It catalyses the reaction L-gulono-1,4-lactone + 2 Fe(III)-[cytochrome c] = L-ascorbate + 2 Fe(II)-[cytochrome c] + 3 H(+). It functions in the pathway cofactor biosynthesis; L-ascorbate biosynthesis. Its function is as follows. Oxidizes L-gulono-1,4-lactone to L-xylo-hexulonolactone which spontaneously isomerizes to L-ascorbate. This Mycobacterium tuberculosis (strain CDC 1551 / Oshkosh) protein is L-gulono-1,4-lactone dehydrogenase.